Consider the following 342-residue polypeptide: Glycerol-3-phosphate dehydrogenase [NAD(P)+] (342 aa).

The NADPH site is built by Trp11, Arg31, and Lys102. Sn-glycerol 3-phosphate-binding residues include Lys102 and Gly132. Ala136 provides a ligand contact to NADPH. Residues Lys187, Asp240, Ser250, Arg251, and Asn252 each contribute to the sn-glycerol 3-phosphate site. Lys187 serves as the catalytic Proton acceptor. Arg251 lines the NADPH pocket. Glu277 serves as a coordination point for NADPH.

This sequence belongs to the NAD-dependent glycerol-3-phosphate dehydrogenase family.

The protein resides in the cytoplasm. It carries out the reaction sn-glycerol 3-phosphate + NAD(+) = dihydroxyacetone phosphate + NADH + H(+). The enzyme catalyses sn-glycerol 3-phosphate + NADP(+) = dihydroxyacetone phosphate + NADPH + H(+). It functions in the pathway membrane lipid metabolism; glycerophospholipid metabolism. Its function is as follows. Catalyzes the reduction of the glycolytic intermediate dihydroxyacetone phosphate (DHAP) to sn-glycerol 3-phosphate (G3P), the key precursor for phospholipid synthesis. The chain is Glycerol-3-phosphate dehydrogenase [NAD(P)+] from Symbiobacterium thermophilum (strain DSM 24528 / JCM 14929 / IAM 14863 / T).